The following is a 648-amino-acid chain: Macrolide export ATP-binding/permease protein MacB (648 aa).

The ABC transporter domain occupies 5 to 243 (LELCNVSRSY…QGVDAAVVNT (239 aa)). Residue 41-48 (GVSGSGKS) participates in ATP binding. Helical transmembrane passes span 273 to 293 (LLTMLGIIIGIASVVSIVVVG), 417 to 437 (ANVVGEVVLAGNMPVIVIGVA), 523 to 543 (LFLTLVAVISLVVGGIGVMNI), 577 to 597 (VLVCLVGGALGISLSMFIAFM), and 611 to 631 (LTALASAFLCSTFTGILFGWL).

The protein belongs to the ABC transporter superfamily. Macrolide exporter (TC 3.A.1.122) family. Homodimer. Part of the tripartite efflux system MacAB-TolC, which is composed of an inner membrane transporter, MacB, a periplasmic membrane fusion protein, MacA, and an outer membrane component, TolC. The complex forms a large protein conduit and can translocate molecules across both the inner and outer membranes. Interacts with MacA.

The protein resides in the cell inner membrane. Functionally, part of the tripartite efflux system MacAB-TolC. MacB is a non-canonical ABC transporter that contains transmembrane domains (TMD), which form a pore in the inner membrane, and an ATP-binding domain (NBD), which is responsible for energy generation. Confers resistance against macrolides. The polypeptide is Macrolide export ATP-binding/permease protein MacB (Salmonella choleraesuis (strain SC-B67)).